The sequence spans 853 residues: EF-hand domain-containing family member B (853 aa).

Disordered stretches follow at residues 1 to 31 (MCSF…TRAP) and 244 to 266 (AQQP…PGNI). 2 consecutive EF-hand domains span residues 581–616 (QNFD…ANLH) and 617–652 (LDKM…KDRI). 7 residues coordinate Ca(2+): Asp-594, Asp-598, Glu-605, Asp-630, Asp-632, Asp-634, and Glu-641.

As to quaternary structure, microtubule inner protein component of sperm flagellar doublet microtubules. Interacts with STIM1 and ORAI1; the interactions take place upon Ca(2+)-store depletion and dissociate through a Ca(2+)-dependent mechanism. Interaction with STIM1 inhibits STIM1 interaction with SARAF.

Its subcellular location is the cytoplasm. The protein localises to the cytoskeleton. The protein resides in the cilium axoneme. It localises to the flagellum axoneme. Functionally, microtubule inner protein (MIP) part of the dynein-decorated doublet microtubules (DMTs) in cilia axoneme, which is required for motile cilia beating. Cytosolic sensor for calcium, modulates the interaction of STIM1 and ORAI1 upon store depletion and the activation of store-operated Ca(2+) entry (SOCE) and NFAT translocation from cytosol to nucleus. This chain is EF-hand domain-containing family member B, found in Mus musculus (Mouse).